The primary structure comprises 354 residues: Cysteine proteinase A (354 aa).

The N-terminal stretch at 1–24 (MARRNPLLFAIVVTILFVVCYGSA) is a signal peptide. The propeptide at 25–125 (LIAQTPPPVD…HKEDVHVDDS (101 aa)) is activation peptide. Intrachain disulfides connect cysteine 150-cysteine 191, cysteine 184-cysteine 229, and cysteine 282-cysteine 330. The active site involves cysteine 153. N-linked (GlcNAc...) asparagine glycosylation is present at asparagine 208. Active-site residues include histidine 289 and asparagine 309.

It belongs to the peptidase C1 family.

The protein is Cysteine proteinase A (LMCPA) of Leishmania mexicana.